We begin with the raw amino-acid sequence, 309 residues long: Golgi-associated RAB2 interactor protein 1A (309 aa).

Phosphoserine occurs at positions 231, 263, and 267.

It belongs to the GARIN family. Interacts (via N-terminus) with RAB2B (in GTP-bound form).

The protein resides in the golgi apparatus. Functionally, RAB2B effector protein required for accurate acrosome formation and normal male fertility. This chain is Golgi-associated RAB2 interactor protein 1A, found in Homo sapiens (Human).